Consider the following 80-residue polypeptide: FXYD domain-containing ion transport regulator 7 (80 aa).

Over 1-22 (MATPTQSPTNVPEETDPFFYDY) the chain is Extracellular. O-linked (GlcNAc) threonine glycosylation is found at Thr3, Thr5, and Thr9. Residues 23-45 (ATVQTVGMTLATIMFVLGIIIII) form a helical membrane-spanning segment. Over 46–80 (SKKVKCRKADSRSESPTCKSCKSELPSSAPGGGGV) the chain is Cytoplasmic. A disordered region spans residues 56–80 (SRSESPTCKSCKSELPSSAPGGGGV). Ser73 is modified (phosphoserine).

The protein belongs to the FXYD family. As to quaternary structure, regulatory subunit of the sodium/potassium-transporting ATPase which is composed of a catalytic alpha subunit, a non-catalytic beta subunit and an additional regulatory subunit. The regulatory subunit, a member of the FXYD protein family, modulates the enzymatic activity in a tissue- and isoform-specific way by changing affinities of the Na+/K+-ATPase toward Na(+), K(+) or ATP. In terms of processing, O-glycosylated; required for stabilization and translocation to the plasma membrane. Expressed specifically in brain. Expressed in both neurons and glia.

It is found in the cell membrane. Functionally, associates with and regulates the activity of the sodium/potassium-transporting ATPase (NKA) which catalyzes the hydrolysis of ATP coupled with the exchange of Na(+) and K(+) ions across the plasma membrane. Reduces the apparent affinity for external K(+), an effect that depends on the presence of external Na(+) and voltage. Increases the apparent affinity for intracellular Na(+). In Rattus norvegicus (Rat), this protein is FXYD domain-containing ion transport regulator 7 (Fxyd7).